The primary structure comprises 319 residues: Epoxyqueuosine reductase (319 aa).

Asp128 (proton donor) is an active-site residue. The region spanning 173–202 (EANDPHPNYCGTCTRCLSACPTAALVEPAV) is the 4Fe-4S ferredoxin-type domain. [4Fe-4S] cluster contacts are provided by Cys182, Cys185, Cys188, Cys192, Cys208, Cys236, Cys239, and Cys243.

Belongs to the QueG family. As to quaternary structure, monomer. It depends on cob(II)alamin as a cofactor. [4Fe-4S] cluster is required as a cofactor.

Its subcellular location is the cytoplasm. It carries out the reaction epoxyqueuosine(34) in tRNA + AH2 = queuosine(34) in tRNA + A + H2O. It participates in tRNA modification; tRNA-queuosine biosynthesis. In terms of biological role, catalyzes the conversion of epoxyqueuosine (oQ) to queuosine (Q), which is a hypermodified base found in the wobble positions of tRNA(Asp), tRNA(Asn), tRNA(His) and tRNA(Tyr). The protein is Epoxyqueuosine reductase of Gloeobacter violaceus (strain ATCC 29082 / PCC 7421).